Here is a 1038-residue protein sequence, read N- to C-terminus: MGTENQGYPNFPARPASSPFASAPPPGIPPQSGGPPTGSEAVGFRPFTPSASQPTRPFTASGPPPAPPVGTMRPGQPSPFVSQIPGSRPPPPSSNSFPSPAYGPPGGAPFQRFPSPPFPTTQNPPQGPPPPQTLAGHLSPPMSLRPQQPMAPVAMGPPPQSTTSGLPGANAYPPATDYHMPARPGFQQSMPPVTPSYPGVGGSQPSFPGYPSKQVLQAPTPFQTSQGPPGPPPVSSYPPHTGGFAQRPNMAAQQNLHPNYAPPPSNVQGLTEDFNSLSLSSIPGSLEPGLDHKSFPRPLDGDVEPNSFAEMYPMNCHSRYLRLTTSAIPNSQSLASRWHLPLGAVVCPLAETPEGEEVPLIDFGSTGIIRCRRCRTYVNPFVTFTDSGRKWRCNICSMLNDVPGEYFSHLDATGRRMDMDQRPELTKGSVEIIAPTEYMVRPPMPPIYFFLIDVSISATKSGMLEVVAQTIKSCLDNLPGYPRTQIGFITYDSTLHFYNMKSSLSQPQMMVVSDLDDIFVPLPDDLLVNLSESRTVVDAFLDSLPLMFQDNFNVESAFGPALRAAFMVMNQLGGKLLIFQNSLPSLGAGRLKLRGDDPRVYGTDKEYALRVAEDPFYKQMAADCTKFQIGINVYAFSDKYTDIASLGTLAKYTGGQVYYYPGFQSSVHGDKLRHELARDLTRETAWEAVMRIRCGKGIRFSSYHGNFMLRSTDLLALPAVDCDKAYAMQLSLEETLLTSQTVYFQVALLYTASCGERRIRVHTSVAPVVTDLGEMYRQADTGSIVSLYARLAIEKSLSAKLDDARNAIQQKIVKALKEYRNLHAVQHRLGSRLVYPESLKFLPLYGLAITKSTPLLGGPADTSLDERCAAGFTMMALPVKKLLKLLYPNLFRVDEWLLKPSAAHDDFKDVLRRLPLAAESLDSRGLYIYDDGFRLVLWFGRMLSPDIAKNLLGVDFAADLSRVTFQEQENGMSKKLMRLVKKLRESDPSYHPMCFLVRQGEQPREGFLLLRNLIEDQMGGSSGYVDWILQLHRQVQQN.

The interval 1–247 (MGTENQGYPN…PPHTGGFAQR (247 aa)) is disordered. Residues 22–33 (SAPPPGIPPQSG) show a composition bias toward pro residues. 4 residues coordinate Zn(2+): Cys-371, Cys-374, Cys-393, and Cys-396. The tract at residues 371–396 (CRRCRTYVNPFVTFTDSGRKWRCNIC) is zinc finger-like.

It belongs to the SEC23/SEC24 family. SEC24 subfamily. In terms of assembly, component of the coat protein complex II (COPII), composed of at least five proteins: the Sec23/24 complex, the Sec13/31 complex and Sar1. Interacts with SEC221, SEC23E/SEC23A, SEC23B, SEC23G/SEC23C and SEC23F/SEC23D. As to quaternary structure, (Microbial infection) Interacts with turnip mosaic virus (TuMV) 6K2 in COPII-coated vesicles. In terms of tissue distribution, mainly expressed in pollen, leaves, inflorescences, roots and stems, and, to a lower extent, in cotyledons, petioles and hypocotyls.

It is found in the cytoplasmic vesicle. The protein resides in the COPII-coated vesicle membrane. Its subcellular location is the endoplasmic reticulum membrane. The protein localises to the golgi apparatus membrane. It localises to the cytoplasm. It is found in the cytosol. Its function is as follows. Essential protein. Component of the coat protein complex II (COPII), that covers ER-derived vesicles involved in transport from the endoplasmic reticulum to the Golgi apparatus. COPII is composed of at least five proteins: the SEC23/24 complex, the SEC13/31 complex, and the protein SAR1. Acts in the cytoplasm to promote the transport of secretory, plasma membrane, and vacuolar proteins from the endoplasmic reticulum to the Golgi complex. Involved in maintaining the dynamic identity of organelles of the early secretory pathway. Regulates cell size patterning, and prevents CDKA;1-, DEK1- and ACR4-dependent endoreduplication and giant cells formation in sepals. Required for male gametophytes (pollen grains) development and transmission. Functionally, (Microbial infection) Contributes to viral systemic infection of turnip mosaic virus (TuMV) by triggering the formation of host endoplasmic reticulum (ER)-derived viral vesicles that carry the viral RNA (vRNA) to plasmodesmata for cell-to-cell viral movement. The protein is Protein transport protein SEC24 A of Arabidopsis thaliana (Mouse-ear cress).